We begin with the raw amino-acid sequence, 497 residues long: Angiopoietin-1 (497 aa).

The N-terminal stretch at 1-19 (MTVFLSFAFFAAILTHIGC) is a signal peptide. Positions 81–119 (QKLQHLEHVMENYTQWLQKLENYIVENMKSEMAQIQQNA) form a coiled coil. N92, N122, N154, N243, and N294 each carry an N-linked (GlcNAc...) asparagine glycan. A coiled-coil region spans residues 153-261 (LNQTSRLEIQ…LELMDTVHNL (109 aa)). The Fibrinogen C-terminal domain occupies 276–496 (REEEKPFRDC…STTMMIRPLD (221 aa)). Cystine bridges form between C285–C314 and C438–C451.

Homooligomer. Interacts with TEK/TIE2. Interacts with SVEP1/polydom. Interacts with THBD; this interaction significantly inhibits the generation of activated PC and TAFIa/CPB2 by the thrombin/thrombomodulin complex.

It localises to the secreted. Binds and activates TIE2 receptor by inducing its tyrosine phosphorylation. Implicated in endothelial developmental processes later and distinct from that of VEGF. Appears to play a crucial role in mediating reciprocal interactions between the endothelium and surrounding matrix and mesenchyme. Mediates blood vessel maturation/stability. It may play an important role in the heart early development. The sequence is that of Angiopoietin-1 (Angpt1) from Rattus norvegicus (Rat).